The sequence spans 83 residues: RNA-binding protein Hfq (83 aa).

Residues D10–I70 form the Sm domain.

It belongs to the Hfq family. As to quaternary structure, homohexamer.

RNA chaperone that binds small regulatory RNA (sRNAs) and mRNAs to facilitate mRNA translational regulation in response to envelope stress, environmental stress and changes in metabolite concentrations. Also binds with high specificity to tRNAs. The sequence is that of RNA-binding protein Hfq from Desulfitobacterium hafniense (strain DSM 10664 / DCB-2).